We begin with the raw amino-acid sequence, 118 residues long: MARIAGINIPDQKHTVIALTAIYGIGRTRAQAICAATSIAEDAKIKELSEAQIDTLREEVANYIVEGDLRREVSMNIKRLMDLGCYRGLRHRRSLPLRGQRTKTNARTRKGPRKPIRK.

Positions Ser94 to Lys118 are disordered.

This sequence belongs to the universal ribosomal protein uS13 family. Part of the 30S ribosomal subunit. Forms a loose heterodimer with protein S19. Forms two bridges to the 50S subunit in the 70S ribosome.

Its function is as follows. Located at the top of the head of the 30S subunit, it contacts several helices of the 16S rRNA. In the 70S ribosome it contacts the 23S rRNA (bridge B1a) and protein L5 of the 50S subunit (bridge B1b), connecting the 2 subunits; these bridges are implicated in subunit movement. Contacts the tRNAs in the A and P-sites. The protein is Small ribosomal subunit protein uS13 of Shewanella halifaxensis (strain HAW-EB4).